Reading from the N-terminus, the 58-residue chain is Large ribosomal subunit protein uL30 (58 aa).

The protein belongs to the universal ribosomal protein uL30 family. In terms of assembly, part of the 50S ribosomal subunit.

The chain is Large ribosomal subunit protein uL30 from Bacteroides thetaiotaomicron (strain ATCC 29148 / DSM 2079 / JCM 5827 / CCUG 10774 / NCTC 10582 / VPI-5482 / E50).